The sequence spans 1031 residues: Pre-mRNA-splicing factor SYF1 (1031 aa).

HAT repeat units follow at residues 28-60 (HLIP…NVKE), 90-122 (DGLQ…TRQS), 214-248 (KNGS…WAEI), and 250-269 (GGDA…PSLT). Residues 346 to 368 (VEEKVDGEQPQVEGQEQQPQEEP) form a disordered region. Over residues 353-368 (EQPQVEGQEQQPQEEP) the composition is skewed to low complexity. HAT repeat units lie at residues 452–487 (GEFE…FSET), 610–646 (PDLE…MELR), 664–698 (PKNT…LEES), 700–732 (GTVE…FLEE), 734–768 (KYFE…KFVK), 773–807 (KKLE…LEEE), 845–879 (FGLP…MERK), and 881–915 (GEID…FEIE). Disordered stretches follow at residues 948–969 (AAAS…QDAA) and 1003–1031 (TNAN…EDEF).

The protein belongs to the crooked-neck family. In terms of assembly, associated with the spliceosome.

The protein resides in the nucleus. Functionally, involved in pre-mRNA splicing and cell cycle progression. The polypeptide is Pre-mRNA-splicing factor SYF1 (SYF1) (Cryptococcus neoformans var. neoformans serotype D (strain B-3501A) (Filobasidiella neoformans)).